Consider the following 353-residue polypeptide: UDP-3-O-acylglucosamine N-acyltransferase (353 aa).

His-258 (proton acceptor) is an active-site residue.

The protein belongs to the transferase hexapeptide repeat family. LpxD subfamily. In terms of assembly, homotrimer.

The enzyme catalyses a UDP-3-O-[(3R)-3-hydroxyacyl]-alpha-D-glucosamine + a (3R)-hydroxyacyl-[ACP] = a UDP-2-N,3-O-bis[(3R)-3-hydroxyacyl]-alpha-D-glucosamine + holo-[ACP] + H(+). Its pathway is bacterial outer membrane biogenesis; LPS lipid A biosynthesis. In terms of biological role, catalyzes the N-acylation of UDP-3-O-acylglucosamine using 3-hydroxyacyl-ACP as the acyl donor. Is involved in the biosynthesis of lipid A, a phosphorylated glycolipid that anchors the lipopolysaccharide to the outer membrane of the cell. This chain is UDP-3-O-acylglucosamine N-acyltransferase, found in Parvibaculum lavamentivorans (strain DS-1 / DSM 13023 / NCIMB 13966).